A 221-amino-acid chain; its full sequence is Ribosomal RNA small subunit methyltransferase G (221 aa).

S-adenosyl-L-methionine contacts are provided by residues Gly-90, Leu-95, 141–142 (VE), and Arg-154.

The protein belongs to the methyltransferase superfamily. RNA methyltransferase RsmG family.

The protein resides in the cytoplasm. The enzyme catalyses guanosine(527) in 16S rRNA + S-adenosyl-L-methionine = N(7)-methylguanosine(527) in 16S rRNA + S-adenosyl-L-homocysteine. In terms of biological role, specifically methylates the N7 position of guanine in position 527 of 16S rRNA. In Polaromonas naphthalenivorans (strain CJ2), this protein is Ribosomal RNA small subunit methyltransferase G.